The primary structure comprises 258 residues: Imidazole glycerol phosphate synthase subunit HisF (258 aa).

Catalysis depends on residues Asp-11 and Asp-130.

The protein belongs to the HisA/HisF family. In terms of assembly, heterodimer of HisH and HisF.

The protein localises to the cytoplasm. It carries out the reaction 5-[(5-phospho-1-deoxy-D-ribulos-1-ylimino)methylamino]-1-(5-phospho-beta-D-ribosyl)imidazole-4-carboxamide + L-glutamine = D-erythro-1-(imidazol-4-yl)glycerol 3-phosphate + 5-amino-1-(5-phospho-beta-D-ribosyl)imidazole-4-carboxamide + L-glutamate + H(+). Its pathway is amino-acid biosynthesis; L-histidine biosynthesis; L-histidine from 5-phospho-alpha-D-ribose 1-diphosphate: step 5/9. Functionally, IGPS catalyzes the conversion of PRFAR and glutamine to IGP, AICAR and glutamate. The HisF subunit catalyzes the cyclization activity that produces IGP and AICAR from PRFAR using the ammonia provided by the HisH subunit. In Shigella boydii serotype 4 (strain Sb227), this protein is Imidazole glycerol phosphate synthase subunit HisF.